The primary structure comprises 261 residues: Cytochrome c oxidase subunit 3 (261 aa).

Residues 1 to 15 (MAHQAHAYHMVDPSP) lie on the Mitochondrial matrix side of the membrane. The helical transmembrane segment at 16–34 (WPLTGAIAALLLTSGTAVW) threads the bilayer. The Mitochondrial intermembrane portion of the chain corresponds to 35–40 (FHFHSL). A helical transmembrane segment spans residues 41-66 (TLLTLGNILLLLTMYQWWRDIIREGT). Residues 67–72 (FQGHHT) lie on the Mitochondrial matrix side of the membrane. The chain crosses the membrane as a helical span at residues 73–105 (PPVQKGLRYGMILFITSEVFFFLGFFWAFYHAS). At 106–128 (LAPTPELGGCWPPTGITTLDPFE) the chain is on the mitochondrial intermembrane side. The chain crosses the membrane as a helical span at residues 129 to 152 (VPLLNTAVLLASGVTVTWAHHSIM). The Mitochondrial matrix segment spans residues 153 to 155 (EGE). Residues 156–183 (RKQTIQALTLTILLGFYFTFLQGMEYYE) traverse the membrane as a helical segment. Residues 184–190 (APFTIAD) lie on the Mitochondrial intermembrane side of the membrane. Residues 191 to 223 (GVYGSTFFVATGFHGLHVIIGSTFLAVCLLRQV) form a helical membrane-spanning segment. At 224 to 232 (QYHFTSEHH) the chain is on the mitochondrial matrix side. A helical transmembrane segment spans residues 233 to 256 (FGFEAAAWYWHFVDVVWLFLYVSI). Over 257–261 (YWWGS) the chain is Mitochondrial intermembrane.

Belongs to the cytochrome c oxidase subunit 3 family. As to quaternary structure, component of the cytochrome c oxidase (complex IV, CIV), a multisubunit enzyme composed of 14 subunits. The complex is composed of a catalytic core of 3 subunits MT-CO1, MT-CO2 and MT-CO3, encoded in the mitochondrial DNA, and 11 supernumerary subunits COX4I, COX5A, COX5B, COX6A, COX6B, COX6C, COX7A, COX7B, COX7C, COX8 and NDUFA4, which are encoded in the nuclear genome. The complex exists as a monomer or a dimer and forms supercomplexes (SCs) in the inner mitochondrial membrane with NADH-ubiquinone oxidoreductase (complex I, CI) and ubiquinol-cytochrome c oxidoreductase (cytochrome b-c1 complex, complex III, CIII), resulting in different assemblies (supercomplex SCI(1)III(2)IV(1) and megacomplex MCI(2)III(2)IV(2)).

The protein localises to the mitochondrion inner membrane. It carries out the reaction 4 Fe(II)-[cytochrome c] + O2 + 8 H(+)(in) = 4 Fe(III)-[cytochrome c] + 2 H2O + 4 H(+)(out). Functionally, component of the cytochrome c oxidase, the last enzyme in the mitochondrial electron transport chain which drives oxidative phosphorylation. The respiratory chain contains 3 multisubunit complexes succinate dehydrogenase (complex II, CII), ubiquinol-cytochrome c oxidoreductase (cytochrome b-c1 complex, complex III, CIII) and cytochrome c oxidase (complex IV, CIV), that cooperate to transfer electrons derived from NADH and succinate to molecular oxygen, creating an electrochemical gradient over the inner membrane that drives transmembrane transport and the ATP synthase. Cytochrome c oxidase is the component of the respiratory chain that catalyzes the reduction of oxygen to water. Electrons originating from reduced cytochrome c in the intermembrane space (IMS) are transferred via the dinuclear copper A center (CU(A)) of subunit 2 and heme A of subunit 1 to the active site in subunit 1, a binuclear center (BNC) formed by heme A3 and copper B (CU(B)). The BNC reduces molecular oxygen to 2 water molecules using 4 electrons from cytochrome c in the IMS and 4 protons from the mitochondrial matrix. The sequence is that of Cytochrome c oxidase subunit 3 (mt-co3) from Oncorhynchus clarkii (Cutthroat trout).